A 120-amino-acid polypeptide reads, in one-letter code: NAD(P)H-quinone oxidoreductase subunit 3 (120 aa).

3 helical membrane passes run 10 to 30 (FLGF…TNLI), 64 to 84 (MFAL…PWAV), and 89 to 109 (LGLL…IALA).

The protein belongs to the complex I subunit 3 family. In terms of assembly, NDH-1 can be composed of about 15 different subunits; different subcomplexes with different compositions have been identified which probably have different functions.

Its subcellular location is the cellular thylakoid membrane. The catalysed reaction is a plastoquinone + NADH + (n+1) H(+)(in) = a plastoquinol + NAD(+) + n H(+)(out). It catalyses the reaction a plastoquinone + NADPH + (n+1) H(+)(in) = a plastoquinol + NADP(+) + n H(+)(out). Functionally, NDH-1 shuttles electrons from an unknown electron donor, via FMN and iron-sulfur (Fe-S) centers, to quinones in the respiratory and/or the photosynthetic chain. The immediate electron acceptor for the enzyme in this species is believed to be plastoquinone. Couples the redox reaction to proton translocation, and thus conserves the redox energy in a proton gradient. Cyanobacterial NDH-1 also plays a role in inorganic carbon-concentration. This chain is NAD(P)H-quinone oxidoreductase subunit 3, found in Prochlorococcus marinus (strain MIT 9215).